The following is a 212-amino-acid chain: Probable GH family 25 lysozyme 2 (212 aa).

Positions 1-19 are cleaved as a signal peptide; that stretch reads MRFIALLISFFALLKVISA. A Ch-type lysozyme domain is found at 20–212; sequence ISGVDISSAS…GLGFDLNWYP (193 aa). Active-site residues include Asp-24, Asp-112, and Glu-114.

Belongs to the glycosyl hydrolase 25 family.

It is found in the secreted. It catalyses the reaction Hydrolysis of (1-&gt;4)-beta-linkages between N-acetylmuramic acid and N-acetyl-D-glucosamine residues in a peptidoglycan and between N-acetyl-D-glucosamine residues in chitodextrins.. The chain is Probable GH family 25 lysozyme 2 from Dictyostelium discoideum (Social amoeba).